The sequence spans 435 residues: Glutamate-1-semialdehyde 2,1-aminomutase (435 aa).

Lysine 266 is modified (N6-(pyridoxal phosphate)lysine).

The protein belongs to the class-III pyridoxal-phosphate-dependent aminotransferase family. HemL subfamily. Homodimer. Pyridoxal 5'-phosphate is required as a cofactor.

The protein localises to the cytoplasm. The enzyme catalyses (S)-4-amino-5-oxopentanoate = 5-aminolevulinate. It functions in the pathway porphyrin-containing compound metabolism; protoporphyrin-IX biosynthesis; 5-aminolevulinate from L-glutamyl-tRNA(Glu): step 2/2. The chain is Glutamate-1-semialdehyde 2,1-aminomutase from Coxiella burnetii (strain CbuG_Q212) (Coxiella burnetii (strain Q212)).